The following is a 333-amino-acid chain: DNA repair and recombination protein RadA (333 aa).

127–134 provides a ligand contact to ATP; it reads GEFGSGKT.

Belongs to the eukaryotic RecA-like protein family.

In terms of biological role, involved in DNA repair and in homologous recombination. Binds and assemble on single-stranded DNA to form a nucleoprotein filament. Hydrolyzes ATP in a ssDNA-dependent manner and promotes DNA strand exchange between homologous DNA molecules. This Pyrobaculum aerophilum (strain ATCC 51768 / DSM 7523 / JCM 9630 / CIP 104966 / NBRC 100827 / IM2) protein is DNA repair and recombination protein RadA.